The following is a 199-amino-acid chain: Chaperone protein TorD (199 aa).

Belongs to the TorD/DmsD family. TorD subfamily.

Its subcellular location is the cytoplasm. In terms of biological role, involved in the biogenesis of TorA. Acts on TorA before the insertion of the molybdenum cofactor and, as a result, probably favors a conformation of the apoenzyme that is competent for acquiring the cofactor. The protein is Chaperone protein TorD of Shigella dysenteriae serotype 1 (strain Sd197).